Here is a 261-residue protein sequence, read N- to C-terminus: Cathepsin G (261 aa).

An N-terminal signal peptide occupies residues 1–18 (MQPLLLLLTFILLQGDEA). A propeptide spans 19–20 (GK) (activation peptide). The important for antimicrobial activity stretch occupies residues 21 to 25 (IIGGR). The 223-residue stretch at 21–243 (IIGGREARPH…FMPWIKRTMR (223 aa)) folds into the Peptidase S1 domain. The cysteines at positions 49 and 65 are disulfide-linked. His64 functions as the Charge relay system in the catalytic mechanism. Asn71 carries an N-linked (GlcNAc...) asparagine glycan. Residues 97-111 (HPDYNPQNIRNDIML) are important for antimicrobial activity. Asp108 functions as the Charge relay system in the catalytic mechanism. 2 disulfides stabilise this stretch: Cys142–Cys207 and Cys172–Cys186. Catalysis depends on Ser201, which acts as the Charge relay system.

It belongs to the peptidase S1 family. As to expression, in adult, detected only in bone marrow where expression is restricted to a small population of early myeloid cells.

The protein resides in the cell membrane. Its subcellular location is the cytoplasmic granule. It localises to the secreted. It is found in the cytoplasm. The protein localises to the cytosol. The protein resides in the lysosome. Its subcellular location is the nucleus. The catalysed reaction is Specificity similar to chymotrypsin C.. With respect to regulation, inhibited by chymostatin, phenylmethanesulfonyl fluoride and diisopropyl fluorophosphate. Serine protease with trypsin- and chymotrypsin-like specificity. Also displays antibacterial activity against Gram-negative and Gram-positive bacteria independent of its protease activity. Prefers Phe and Tyr residues in the P1 position of substrates but also cleaves efficiently after Trp and Leu. Shows a preference for negatively charged amino acids in the P2' position and for aliphatic amino acids both upstream and downstream of the cleavage site. Required for recruitment and activation of platelets which is mediated by the F2RL3/PAR4 platelet receptor. Binds reversibly to and stimulates B cells and CD4(+) and CD8(+) T cells. Also binds reversibly to natural killer (NK) cells and enhances NK cell cytotoxicity through its protease activity. Cleaves complement C3. Cleaves vimentin. Cleaves thrombin receptor F2R/PAR1. Cleaves the synovial mucin-type protein PRG4/lubricin. Cleaves and activates IL36G which promotes expression of chemokines CXCL1 and CXLC8 in keratinocytes. Cleaves IL33 into mature forms which have greater activity than the unprocessed form. Cleaves coagulation factor F8 to produce a partially activated form. Also cleaves and activates coagulation factor F10. Cleaves leukocyte cell surface protein SPN/CD43 to release its extracellular domain and trigger its intramembrane proteolysis by gamma-secretase, releasing the CD43 cytoplasmic tail chain (CD43-ct) which translocates to the nucleus. During apoptosis, cleaves SMARCA2/BRM to produce a 160 kDa cleavage product which localizes to the cytosol. Cleaves MBP in B cell lysosomes at '221-Phe-|-Lys-222', degrading the major immunogenic MBP epitope and preventing the activation of MBP-specific autoreactive T cells. Cleaves annexin ANXA1 and antimicrobial peptide CAMP to produce peptides which act on neutrophil N-formyl peptide receptors to enhance the release of CXCL2. Acts as a ligand for the N-formyl peptide receptor FPR1, enhancing phagocyte chemotaxis. Has antibacterial activity against the Gram-negative bacteria N.gonorrhoeae and P.aeruginosa. Likely to act against N.gonorrhoeae by interacting with N.gonorrhoeae penA/PBP2. Exhibits potent antimicrobial activity against the Gram-positive bacterium L.monocytogenes. Has antibacterial activity against the Gram-positive bacterium S.aureus and degrades S.aureus biofilms, allowing polymorphonuclear leukocytes to penetrate the biofilm and phagocytose bacteria. Has antibacterial activity against M.tuberculosis. Induces platelet aggregation which is strongly potentiated in the presence of ELANE. The protein is Cathepsin G (Ctsg) of Mus musculus (Mouse).